The sequence spans 200 residues: Probable GTP-binding protein EngB (200 aa).

The EngB-type G domain occupies 22–197 (DLPEIAFAGR…WQAIQDAVEE (176 aa)). GTP-binding positions include 30–37 (GRSNVGKS), 57–61 (GRTQL), 78–81 (DLPG), 145–148 (TKCD), and 176–178 (FSA). Mg(2+) contacts are provided by S37 and T59.

This sequence belongs to the TRAFAC class TrmE-Era-EngA-EngB-Septin-like GTPase superfamily. EngB GTPase family. Mg(2+) serves as cofactor.

Functionally, necessary for normal cell division and for the maintenance of normal septation. The sequence is that of Probable GTP-binding protein EngB from Trichlorobacter lovleyi (strain ATCC BAA-1151 / DSM 17278 / SZ) (Geobacter lovleyi).